Reading from the N-terminus, the 348-residue chain is Anthranilate phosphoribosyltransferase (348 aa).

Residues Gly84, 87–88 (GD), Thr92, 94–97 (NITT), 112–120 (KHGNRSVSS), and Ser124 contribute to the 5-phospho-alpha-D-ribose 1-diphosphate site. Residue Gly84 participates in anthranilate binding. Residue Thr96 coordinates Mg(2+). An anthranilate-binding site is contributed by Asn115. Position 170 (Arg170) interacts with anthranilate. Residues Asp228 and Glu229 each coordinate Mg(2+).

This sequence belongs to the anthranilate phosphoribosyltransferase family. Homodimer. It depends on Mg(2+) as a cofactor.

The enzyme catalyses N-(5-phospho-beta-D-ribosyl)anthranilate + diphosphate = 5-phospho-alpha-D-ribose 1-diphosphate + anthranilate. It functions in the pathway amino-acid biosynthesis; L-tryptophan biosynthesis; L-tryptophan from chorismate: step 2/5. Its function is as follows. Catalyzes the transfer of the phosphoribosyl group of 5-phosphorylribose-1-pyrophosphate (PRPP) to anthranilate to yield N-(5'-phosphoribosyl)-anthranilate (PRA). The chain is Anthranilate phosphoribosyltransferase from Corynebacterium glutamicum (strain R).